We begin with the raw amino-acid sequence, 1095 residues long: DNA-directed RNA polymerase subunit beta (1095 aa).

The interval 1069 to 1095 (DLMQDVNPRRSTPSRPTYESLGKEYEE) is disordered.

The protein belongs to the RNA polymerase beta chain family. As to quaternary structure, in cyanobacteria the RNAP catalytic core is composed of 2 alpha, 1 beta, 1 beta', 1 gamma and 1 omega subunit. When a sigma factor is associated with the core the holoenzyme is formed, which can initiate transcription.

It catalyses the reaction RNA(n) + a ribonucleoside 5'-triphosphate = RNA(n+1) + diphosphate. Its function is as follows. DNA-dependent RNA polymerase catalyzes the transcription of DNA into RNA using the four ribonucleoside triphosphates as substrates. This chain is DNA-directed RNA polymerase subunit beta, found in Prochlorococcus marinus (strain NATL1A).